The chain runs to 386 residues: 4-hydroxy-3-methylbut-2-en-1-yl diphosphate synthase (flavodoxin) (386 aa).

Cys-289, Cys-292, Cys-324, and Glu-331 together coordinate [4Fe-4S] cluster.

Belongs to the IspG family. [4Fe-4S] cluster serves as cofactor.

It catalyses the reaction (2E)-4-hydroxy-3-methylbut-2-enyl diphosphate + oxidized [flavodoxin] + H2O + 2 H(+) = 2-C-methyl-D-erythritol 2,4-cyclic diphosphate + reduced [flavodoxin]. The protein operates within isoprenoid biosynthesis; isopentenyl diphosphate biosynthesis via DXP pathway; isopentenyl diphosphate from 1-deoxy-D-xylulose 5-phosphate: step 5/6. In terms of biological role, converts 2C-methyl-D-erythritol 2,4-cyclodiphosphate (ME-2,4cPP) into 1-hydroxy-2-methyl-2-(E)-butenyl 4-diphosphate. This Nitratidesulfovibrio vulgaris (strain ATCC 29579 / DSM 644 / CCUG 34227 / NCIMB 8303 / VKM B-1760 / Hildenborough) (Desulfovibrio vulgaris) protein is 4-hydroxy-3-methylbut-2-en-1-yl diphosphate synthase (flavodoxin).